We begin with the raw amino-acid sequence, 367 residues long: Flagellar P-ring protein (367 aa).

The first 21 residues, 1–21 (MYVFKALAGIVLALVATLAHA), serve as a signal peptide directing secretion.

It belongs to the FlgI family. In terms of assembly, the basal body constitutes a major portion of the flagellar organelle and consists of four rings (L,P,S, and M) mounted on a central rod.

Its subcellular location is the periplasm. It localises to the bacterial flagellum basal body. Its function is as follows. Assembles around the rod to form the L-ring and probably protects the motor/basal body from shearing forces during rotation. The chain is Flagellar P-ring protein from Salmonella choleraesuis (strain SC-B67).